Consider the following 335-residue polypeptide: Leukocyte immunoglobulin-like receptor subfamily B member 4A (335 aa).

The signal sequence occupies residues Met-1 to Ala-23. Topologically, residues Gly-24–Lys-238 are extracellular. 2 Ig-like C2-type domains span residues Tyr-42–Ser-125 and Pro-124–Asn-212. The cysteines at positions 49 and 98 are disulfide-linked. Residues Asn-133 and Asn-191 are each glycosylated (N-linked (GlcNAc...) asparagine). The cysteines at positions 144 and 196 are disulfide-linked. The helical transmembrane segment at Ile-239–Ile-260 threads the bilayer. Residues Gly-261–Ser-335 lie on the Cytoplasmic side of the membrane. 2 short sequence motifs (ITIM motif) span residues Ile-298–Val-303 and Val-320–Leu-325.

As to quaternary structure, interacts (when tyrosine phosphorylated) with SH2 domain-containing phosphatases PTPN6/SHP-1 and PTPN11/SHP-2; interaction with PTPN6 enhances inhibition of mast cell activation. Tyrosine phosphorylated. In terms of tissue distribution, expressed on mast cells and natural killer cells (at protein level). Expressed on neutrophils (at protein level). Expressed on eosinophils (at protein level). Expressed on dendritic cells (at protein level). Expressed on memory and marginal zone B cells (at protein level). Expressed on CD8 T cells (at protein level). Expressed in the uterus of pregnant mice where it is detected at day 4.0 of pregnancy with levels dropping at day 4.5. Highly expressed in the luminal epithelium of uterine endometrium with lower levels in the glandular epithelium.

The protein localises to the cell membrane. Functionally, inhibitory receptor involved in the down-regulation of the immune response. Receptor for FN1. Receptor for integrin ITGAV/ITGB3. Inhibits IgE-mediated mast cell activation, at least in part through interaction with ITGAV/ITGB3. Also inhibits KITLG/SCF-mediated mast cell activation. Through interaction with ITGAV/ITGB3, inhibits antibody production by memory and marginal zone B cells, probably by suppressing their differentiation into plasma cells. Inhibits IFNG production by CD8 T cells, CD4 T cells and natural killer cells. Inhibits antigen presentation by dendritic cells to T cells, preventing T cell activation. Inhibits lipopolysaccharide-mediated neutrophil-dependent vascular injury. Suppresses the allergic inflammatory response by inhibiting infiltration of neutrophils and eosinophils and preventing mast cell degranulation. Inhibits lysis by natural killer cells. The polypeptide is Leukocyte immunoglobulin-like receptor subfamily B member 4A (Mus musculus (Mouse)).